A 106-amino-acid chain; its full sequence is uncharacterized protein (106 aa).

The interval 38-106 (KGNKKSKAAT…STHLPYHGSY (69 aa)) is disordered. 2 stretches are compositionally biased toward basic and acidic residues: residues 57-71 (TRQE…HRPE) and 82-96 (WKKE…KETS).

Its subcellular location is the mitochondrion. This is an uncharacterized protein from Arabidopsis thaliana (Mouse-ear cress).